The following is a 692-amino-acid chain: Elongation factor G (692 aa).

The tr-type G domain occupies Glu8–Thr282. Residues Ala17–Thr24, Asp81–His85, and Asn135–Asp138 each bind GTP.

The protein belongs to the TRAFAC class translation factor GTPase superfamily. Classic translation factor GTPase family. EF-G/EF-2 subfamily.

The protein resides in the cytoplasm. Functionally, catalyzes the GTP-dependent ribosomal translocation step during translation elongation. During this step, the ribosome changes from the pre-translocational (PRE) to the post-translocational (POST) state as the newly formed A-site-bound peptidyl-tRNA and P-site-bound deacylated tRNA move to the P and E sites, respectively. Catalyzes the coordinated movement of the two tRNA molecules, the mRNA and conformational changes in the ribosome. The sequence is that of Elongation factor G from Trichormus variabilis (strain ATCC 29413 / PCC 7937) (Anabaena variabilis).